Here is a 353-residue protein sequence, read N- to C-terminus: S-adenosylmethionine:tRNA ribosyltransferase-isomerase (353 aa).

Belongs to the QueA family. In terms of assembly, monomer.

The protein localises to the cytoplasm. It catalyses the reaction 7-aminomethyl-7-carbaguanosine(34) in tRNA + S-adenosyl-L-methionine = epoxyqueuosine(34) in tRNA + adenine + L-methionine + 2 H(+). It participates in tRNA modification; tRNA-queuosine biosynthesis. Transfers and isomerizes the ribose moiety from AdoMet to the 7-aminomethyl group of 7-deazaguanine (preQ1-tRNA) to give epoxyqueuosine (oQ-tRNA). The polypeptide is S-adenosylmethionine:tRNA ribosyltransferase-isomerase (Baumannia cicadellinicola subsp. Homalodisca coagulata).